Here is a 674-residue protein sequence, read N- to C-terminus: L-type lectin-domain containing receptor kinase IV.3 (674 aa).

A signal peptide spans 1–22 (MFFKLFTIFFFFIILLSKPLNS). N-linked (GlcNAc...) asparagine glycosylation is found at Asn-21, Asn-28, Asn-40, Asn-81, Asn-136, and Asn-188. Topologically, residues 23-296 (SSQSLNFTYN…TSLQRFYKNR (274 aa)) are extracellular. The tract at residues 26–263 (SLNFTYNSFH…SEHFVFGWSF (238 aa)) is legume-lectin like. A helical membrane pass occupies residues 297 to 317 (MPLFSLLLIPVLFVVSLIFLV). The Cytoplasmic portion of the chain corresponds to 318-674 (RFIVRRRRKF…IAYSIVSGGR (357 aa)). The region spanning 355 to 632 (FKDKDLLGSG…LQYLRGDATL (278 aa)) is the Protein kinase domain. Residues 361–369 (LGSGGFGRV) and Lys-384 each bind ATP. Asp-480 serves as the catalytic Proton acceptor.

In the C-terminal section; belongs to the protein kinase superfamily. Ser/Thr protein kinase family. This sequence in the N-terminal section; belongs to the leguminous lectin family.

It localises to the cell membrane. It carries out the reaction L-seryl-[protein] + ATP = O-phospho-L-seryl-[protein] + ADP + H(+). The enzyme catalyses L-threonyl-[protein] + ATP = O-phospho-L-threonyl-[protein] + ADP + H(+). The protein is L-type lectin-domain containing receptor kinase IV.3 (LECRK43) of Arabidopsis thaliana (Mouse-ear cress).